Reading from the N-terminus, the 940-residue chain is Phagocyte signaling-impaired protein (940 aa).

The TPR repeat unit spans residues 77 to 110 (STTLHVMTLCYKETDQLDKICQIFTSASKQLPGN).

Belongs to the MDM20/NAA25 family. As to quaternary structure, component of the N-terminal acetyltransferase B (NatB) complex.

It is found in the lysosome. In terms of biological role, non-catalytic subunit of the NatB complex which catalyzes acetylation of the N-terminal methionine residues of proteins beginning with Met-Asp or Met-Glu. Has 2 roles in the larval immune response: required both for the phagocytic degradation of internalized bacteria and for the induction of Defensin in the fat body. Within the phagocytic blood cells, has a role in detection of infection and activation of the humoral immune response. This is Phagocyte signaling-impaired protein from Aedes aegypti (Yellowfever mosquito).